The chain runs to 338 residues: MDLDWLMKCKCKKMLKRLTVKVSGYVVAKITKKGSEETKLKPLVMGKHNQILNLQSLLNAFVGNSSGVTTSSYGEGITLLGANGESVAELAFLTVTPQPTAGGGEVIFTGLDISNSAYTTTQQVLTTESSGYDIEIATADLSFTKNSDEQLYMTWVISFTVTSNPDNVTIVPSLNMSFTVPPNGYYSAPSLCQYTPDNGNLKAQSATGQSSPTTSNPSGYELTTLVTSLLFTWLIYSSSPGASLEYLAFVGTNSLALAVETNTMGSVSGVQYTATTIGPNNFVTGNYIFVESSNNWTVYTRVSPNANDSTISPVFVNAVYSGLFSECTFQGIVIQFTT.

This is an uncharacterized protein from Acidianus filamentous virus 2 (isolate Italy/Pozzuoli) (AFV-2).